The sequence spans 158 residues: Transcription elongation factor GreA (158 aa).

Positions 53–73 (EQQGMVEARIRDIEAKLSNAQ) form a coiled coil.

This sequence belongs to the GreA/GreB family.

Its function is as follows. Necessary for efficient RNA polymerase transcription elongation past template-encoded arresting sites. The arresting sites in DNA have the property of trapping a certain fraction of elongating RNA polymerases that pass through, resulting in locked ternary complexes. Cleavage of the nascent transcript by cleavage factors such as GreA or GreB allows the resumption of elongation from the new 3'terminus. GreA releases sequences of 2 to 3 nucleotides. In Pseudomonas aeruginosa (strain ATCC 15692 / DSM 22644 / CIP 104116 / JCM 14847 / LMG 12228 / 1C / PRS 101 / PAO1), this protein is Transcription elongation factor GreA.